The following is a 41-amino-acid chain: Large ribosomal subunit protein bL36 (41 aa).

It belongs to the bacterial ribosomal protein bL36 family.

The protein is Large ribosomal subunit protein bL36 of Rhodopseudomonas palustris (strain HaA2).